Reading from the N-terminus, the 113-residue chain is Ribonuclease P protein component (113 aa).

Belongs to the RnpA family. As to quaternary structure, consists of a catalytic RNA component (M1 or rnpB) and a protein subunit.

The catalysed reaction is Endonucleolytic cleavage of RNA, removing 5'-extranucleotides from tRNA precursor.. RNaseP catalyzes the removal of the 5'-leader sequence from pre-tRNA to produce the mature 5'-terminus. It can also cleave other RNA substrates such as 4.5S RNA. The protein component plays an auxiliary but essential role in vivo by binding to the 5'-leader sequence and broadening the substrate specificity of the ribozyme. The polypeptide is Ribonuclease P protein component (Clavibacter michiganensis subsp. michiganensis (strain NCPPB 382)).